A 301-amino-acid chain; its full sequence is MSDISTTLAGIKLVNPFMVASGILDENGYTMKELLERGAAAVVTKSIGISERDGYPTPVIVEYGDSLINAVGLSNPGIENFGEEINIAKEAKRPIIGSVFAYNAEEFTKLSVKMEEYGVDAIELNLSCPHVKGFGLEVGSDPDLVEDIVNEIKSKVKVPVFAKLSPNVSNIIEIAKAAEKADAYVLINTVKAMAIDIYSRSPVLSNLYGGLSGPAIKPVGIRYVYEVKKETGKEIIGVGGISNYKDAIEYIMAGASAVQIGTALYKYGKGIFREMEWQLRTFMDEERFEKIEEMVGVAIKR.

FMN-binding positions include Ser-21 and 45–46 (KS). Residues Lys-45, 69-73 (NAVGL), and Asn-125 contribute to the substrate site. An FMN-binding site is contributed by Asn-125. Cys-128 acts as the Nucleophile in catalysis. Residues Lys-163 and Ile-187 each coordinate FMN. Substrate is bound at residue 188 to 189 (NT). Residues Gly-213, 239 to 240 (GG), and 261 to 262 (GT) contribute to the FMN site.

Belongs to the dihydroorotate dehydrogenase family. Type 1 subfamily. In terms of assembly, heterotetramer of 2 PyrK and 2 PyrD type B subunits. FMN is required as a cofactor.

It localises to the cytoplasm. The enzyme catalyses (S)-dihydroorotate + NAD(+) = orotate + NADH + H(+). It functions in the pathway pyrimidine metabolism; UMP biosynthesis via de novo pathway; orotate from (S)-dihydroorotate (NAD(+) route): step 1/1. Catalyzes the conversion of dihydroorotate to orotate with NAD(+) as electron acceptor. The sequence is that of Dihydroorotate dehydrogenase B (NAD(+)), catalytic subunit (pyrD) from Thermoplasma volcanium (strain ATCC 51530 / DSM 4299 / JCM 9571 / NBRC 15438 / GSS1).